The chain runs to 650 residues: ATP-dependent DNA helicase PIF1 (650 aa).

The interval Met14–Gln192 is PINT. Ser40 and Ser164 each carry phosphoserine. The tract at residues Leu171–Arg199 is disordered. An ATP-binding site is contributed by Gly237–Ser244. A DNA-binding region spans residues Gln586–Phe605. The tract at residues Leu631–Leu650 is disordered. The segment covering Ser633–Leu650 has biased composition (acidic residues).

It belongs to the helicase family. PIF1 subfamily. In terms of assembly, monomer. Interacts with telomerase. It depends on Mg(2+) as a cofactor.

It is found in the nucleus. It localises to the mitochondrion. The catalysed reaction is Couples ATP hydrolysis with the unwinding of duplex DNA at the replication fork by translocating in the 5'-3' direction. This creates two antiparallel DNA single strands (ssDNA). The leading ssDNA polymer is the template for DNA polymerase III holoenzyme which synthesizes a continuous strand.. It carries out the reaction ATP + H2O = ADP + phosphate + H(+). DNA-dependent ATPase and 5'-3' DNA helicase required for the maintenance of both mitochondrial and nuclear genome stability. Efficiently unwinds G-quadruplex (G4) DNA structures and forked RNA-DNA hybrids. Resolves G4 structures, preventing replication pausing and double-strand breaks (DSBs) at G4 motifs. Involved in the maintenance of telomeric DNA. Inhibits telomere elongation, de novo telomere formation and telomere addition to DSBs via catalytic inhibition of telomerase. Reduces the processivity of telomerase by displacing active telomerase from DNA ends. Releases telomerase by unwinding the short telomerase RNA/telomeric DNA hybrid that is the intermediate in the telomerase reaction. Possesses an intrinsic strand annealing activity. The chain is ATP-dependent DNA helicase PIF1 from Mus musculus (Mouse).